Reading from the N-terminus, the 67-residue chain is Protein Tpau_2998 (67 aa).

The chain is Protein Tpau_2998 from Tsukamurella paurometabola (strain ATCC 8368 / DSM 20162 / CCUG 35730 / CIP 100753 / JCM 10117 / KCTC 9821 / NBRC 16120 / NCIMB 702349 / NCTC 13040) (Corynebacterium paurometabolum).